The following is a 435-amino-acid chain: Oocyte zinc finger protein XlCOF22 (435 aa).

Residues 71-92 (NANTSAHFSRNRDSDKHERTHT) are disordered. Residues 80–91 (RNRDSDKHERTH) are compositionally biased toward basic and acidic residues. 12 consecutive C2H2-type zinc fingers follow at residues 97 to 120 (HSCS…RQSH), 126 to 148 (FSCS…QRTH), 154 to 176 (FCCF…RRTH), 182 to 204 (FSCL…QRTH), 210 to 232 (FSCL…QRTH), 238 to 260 (FSCL…QRTH), 266 to 288 (FSCF…QRTH), 294 to 316 (FSCS…QRTH), 322 to 345 (YSCS…RRTH), 351 to 373 (FSCS…QRTH), 379 to 402 (FSCS…RQTH), and 408 to 430 (VSCS…FKIH).

Belongs to the krueppel C2H2-type zinc-finger protein family.

The protein localises to the nucleus. Functionally, may be involved in transcriptional regulation. In Xenopus laevis (African clawed frog), this protein is Oocyte zinc finger protein XlCOF22.